The chain runs to 239 residues: Ribonuclease PH (239 aa).

Phosphate-binding positions include Arg-86 and 124 to 126; that span reads GTR.

Belongs to the RNase PH family. As to quaternary structure, homohexameric ring arranged as a trimer of dimers.

It carries out the reaction tRNA(n+1) + phosphate = tRNA(n) + a ribonucleoside 5'-diphosphate. Phosphorolytic 3'-5' exoribonuclease that plays an important role in tRNA 3'-end maturation. Removes nucleotide residues following the 3'-CCA terminus of tRNAs; can also add nucleotides to the ends of RNA molecules by using nucleoside diphosphates as substrates, but this may not be physiologically important. Probably plays a role in initiation of 16S rRNA degradation (leading to ribosome degradation) during starvation. The polypeptide is Ribonuclease PH (Marinomonas sp. (strain MWYL1)).